The chain runs to 229 residues: Ribonuclease 3 (229 aa).

The 123-residue stretch at Leu5–Gly127 folds into the RNase III domain. Glu40 is a binding site for Mg(2+). Asp44 is an active-site residue. Residues Asp113 and Glu116 each coordinate Mg(2+). Residue Glu116 is part of the active site. The DRBM domain occupies Asp154 to Val224.

It belongs to the ribonuclease III family. Homodimer. Mg(2+) serves as cofactor.

The protein localises to the cytoplasm. It carries out the reaction Endonucleolytic cleavage to 5'-phosphomonoester.. Functionally, digests double-stranded RNA. Involved in the processing of primary rRNA transcript to yield the immediate precursors to the large and small rRNAs (23S and 16S). Processes some mRNAs, and tRNAs when they are encoded in the rRNA operon. Processes pre-crRNA and tracrRNA of type II CRISPR loci if present in the organism. The protein is Ribonuclease 3 of Pseudomonas syringae pv. syringae (strain B728a).